A 590-amino-acid polypeptide reads, in one-letter code: 2-hydroxyacyl-CoA lyase (590 aa).

2-hydroxyisobutanoyl-CoA is bound by residues Gly-43, Gln-128, Gln-255, 273 to 274 (RS), and Arg-362. 410-412 (GDL) contributes to the thiamine diphosphate binding site. A 2-hydroxyisobutanoyl-CoA-binding site is contributed by Arg-417. Gly-433 contributes to the thiamine diphosphate binding site. A Mg(2+)-binding site is contributed by Asp-460. Residues 461 to 462 (GA) and 487 to 492 (NRAWNI) each bind thiamine diphosphate. Positions 487 and 489 each coordinate Mg(2+). Glu-493 functions as the Proton acceptor in the catalytic mechanism. 561 to 564 (DSGK) serves as a coordination point for 2-hydroxyisobutanoyl-CoA. The interval 566–590 (LGFVPDYQALTPWNDAEVARRQEGI) is C-terminal lid.

The protein belongs to the TPP enzyme family. As to quaternary structure, a homotetramer formed by a dimer of dimers; active sites are located in the dimer interface. It depends on Mg(2+) as a cofactor. The cofactor is thiamine diphosphate.

The enzyme catalyses 2-hydroxyisobutanoyl-CoA = formyl-CoA + acetone. With respect to regulation, activity is stimulated by thiamine diphosphate. Functionally, a lyase that reversibly degrades 2-hydroxyisobutyryl-CoA (2-HIB-CoA) to acetone and formyl-CoA. Probably also cleaves 2-hydroxy-2-methylbutyryl-CoA to butanone and formyl-CoA. Does not act on 2-hydroxy-2-ethylbutyryl-CoA. A C-terminal lid closes the active site upon substrate binding, and with residues Leu-127 and Ile-492 restricts the size of the active site cavity so it can only use short-chain (C4 and C5) acyl substrates. Part of a pathway that allows cells to grow on 2-methylpropane-1,2-diol or 2-hydroxyisobutyric acid (2-HIBA) as a sole carbon source. The protein is 2-hydroxyacyl-CoA lyase of Actinomycetospora chiangmaiensis (strain DSM 45062 / JCM 15998 / CCTCC AA 205017 / NBRC 104400 / YIM 0006).